The sequence spans 1207 residues: DNA-directed RNA polymerase subunit beta' (1207 aa).

4 residues coordinate Zn(2+): Cys60, Cys62, Cys75, and Cys78. Mg(2+) is bound by residues Asp449, Asp451, and Asp453. Zn(2+) contacts are provided by Cys822, Cys896, Cys903, and Cys906.

The protein belongs to the RNA polymerase beta' chain family. As to quaternary structure, the RNAP catalytic core consists of 2 alpha, 1 beta, 1 beta' and 1 omega subunit. When a sigma factor is associated with the core the holoenzyme is formed, which can initiate transcription. Mg(2+) is required as a cofactor. It depends on Zn(2+) as a cofactor.

It carries out the reaction RNA(n) + a ribonucleoside 5'-triphosphate = RNA(n+1) + diphosphate. Functionally, DNA-dependent RNA polymerase catalyzes the transcription of DNA into RNA using the four ribonucleoside triphosphates as substrates. This chain is DNA-directed RNA polymerase subunit beta', found in Staphylococcus aureus (strain NCTC 8325 / PS 47).